A 362-amino-acid chain; its full sequence is Probable dual-specificity RNA methyltransferase RlmN (362 aa).

Residue E105 is the Proton acceptor of the active site. The Radical SAM core domain maps to 111 to 344 (HEYGNSICVT…VTIRREQGHD (234 aa)). A disulfide bridge connects residues C118 and C349. Positions 125, 129, and 132 each coordinate [4Fe-4S] cluster. S-adenosyl-L-methionine contacts are provided by residues 175–176 (GE), S207, 230–232 (SLH), and N306. C349 (S-methylcysteine intermediate) is an active-site residue.

Belongs to the radical SAM superfamily. RlmN family. The cofactor is [4Fe-4S] cluster.

Its subcellular location is the cytoplasm. The enzyme catalyses adenosine(2503) in 23S rRNA + 2 reduced [2Fe-2S]-[ferredoxin] + 2 S-adenosyl-L-methionine = 2-methyladenosine(2503) in 23S rRNA + 5'-deoxyadenosine + L-methionine + 2 oxidized [2Fe-2S]-[ferredoxin] + S-adenosyl-L-homocysteine. It carries out the reaction adenosine(37) in tRNA + 2 reduced [2Fe-2S]-[ferredoxin] + 2 S-adenosyl-L-methionine = 2-methyladenosine(37) in tRNA + 5'-deoxyadenosine + L-methionine + 2 oxidized [2Fe-2S]-[ferredoxin] + S-adenosyl-L-homocysteine. In terms of biological role, specifically methylates position 2 of adenine 2503 in 23S rRNA and position 2 of adenine 37 in tRNAs. The protein is Probable dual-specificity RNA methyltransferase RlmN of Bacillus cereus (strain G9842).